The chain runs to 230 residues: Large ribosomal subunit protein uL1 (230 aa).

This sequence belongs to the universal ribosomal protein uL1 family. Part of the 50S ribosomal subunit.

Functionally, binds directly to 23S rRNA. The L1 stalk is quite mobile in the ribosome, and is involved in E site tRNA release. Its function is as follows. Protein L1 is also a translational repressor protein, it controls the translation of the L11 operon by binding to its mRNA. This is Large ribosomal subunit protein uL1 from Ligilactobacillus salivarius (strain UCC118) (Lactobacillus salivarius).